The primary structure comprises 256 residues: Thiazole synthase (256 aa).

Catalysis depends on lysine 95, which acts as the Schiff-base intermediate with DXP. Residues glycine 156, 182–183 (AG), and 204–205 (NT) each bind 1-deoxy-D-xylulose 5-phosphate.

This sequence belongs to the ThiG family. Homotetramer. Forms heterodimers with either ThiH or ThiS.

The protein resides in the cytoplasm. The enzyme catalyses [ThiS sulfur-carrier protein]-C-terminal-Gly-aminoethanethioate + 2-iminoacetate + 1-deoxy-D-xylulose 5-phosphate = [ThiS sulfur-carrier protein]-C-terminal Gly-Gly + 2-[(2R,5Z)-2-carboxy-4-methylthiazol-5(2H)-ylidene]ethyl phosphate + 2 H2O + H(+). The protein operates within cofactor biosynthesis; thiamine diphosphate biosynthesis. Functionally, catalyzes the rearrangement of 1-deoxy-D-xylulose 5-phosphate (DXP) to produce the thiazole phosphate moiety of thiamine. Sulfur is provided by the thiocarboxylate moiety of the carrier protein ThiS. In vitro, sulfur can be provided by H(2)S. The polypeptide is Thiazole synthase (Escherichia coli (strain K12 / MC4100 / BW2952)).